Reading from the N-terminus, the 367-residue chain is 3-isopropylmalate dehydrogenase (367 aa).

77-90 contacts NAD(+); that stretch reads GPKWDAVPYEVRPE. Substrate contacts are provided by Arg97, Arg107, Arg135, and Asp226. Mg(2+) is bound by residues Asp226, Asp250, and Asp254. An NAD(+)-binding site is contributed by 290 to 302; the sequence is GSAPDIAGKGIAN.

It belongs to the isocitrate and isopropylmalate dehydrogenases family. LeuB type 1 subfamily. Homodimer. It depends on Mg(2+) as a cofactor. The cofactor is Mn(2+).

The protein localises to the cytoplasm. It carries out the reaction (2R,3S)-3-isopropylmalate + NAD(+) = 4-methyl-2-oxopentanoate + CO2 + NADH. The protein operates within amino-acid biosynthesis; L-leucine biosynthesis; L-leucine from 3-methyl-2-oxobutanoate: step 3/4. Its function is as follows. Catalyzes the oxidation of 3-carboxy-2-hydroxy-4-methylpentanoate (3-isopropylmalate) to 3-carboxy-4-methyl-2-oxopentanoate. The product decarboxylates to 4-methyl-2 oxopentanoate. In Mesorhizobium japonicum (strain LMG 29417 / CECT 9101 / MAFF 303099) (Mesorhizobium loti (strain MAFF 303099)), this protein is 3-isopropylmalate dehydrogenase.